The following is a 131-amino-acid chain: UPF0102 protein YraN (131 aa).

Residues 1–19 (MATVPTRSGSPRQLTTKQT) show a composition bias toward polar residues. A disordered region spans residues 1-20 (MATVPTRSGSPRQLTTKQTG).

It belongs to the UPF0102 family.

This Escherichia coli (strain 55989 / EAEC) protein is UPF0102 protein YraN.